The primary structure comprises 139 residues: Nucleoside diphosphate kinase (139 aa).

6 residues coordinate ATP: Lys-11, Phe-59, Arg-87, Thr-93, Arg-104, and Asn-114. The active-site Pros-phosphohistidine intermediate is His-117.

Belongs to the NDK family. Homotetramer. Requires Mg(2+) as cofactor.

It localises to the cytoplasm. It catalyses the reaction a 2'-deoxyribonucleoside 5'-diphosphate + ATP = a 2'-deoxyribonucleoside 5'-triphosphate + ADP. The enzyme catalyses a ribonucleoside 5'-diphosphate + ATP = a ribonucleoside 5'-triphosphate + ADP. Major role in the synthesis of nucleoside triphosphates other than ATP. The ATP gamma phosphate is transferred to the NDP beta phosphate via a ping-pong mechanism, using a phosphorylated active-site intermediate. The protein is Nucleoside diphosphate kinase of Flavobacterium johnsoniae (strain ATCC 17061 / DSM 2064 / JCM 8514 / BCRC 14874 / CCUG 350202 / NBRC 14942 / NCIMB 11054 / UW101) (Cytophaga johnsonae).